The following is a 465-amino-acid chain: Methionine aminopeptidase 2-2 (465 aa).

A compositionally biased stretch (basic and acidic residues) spans 1 to 13; it reads MGSKTPNDHRRGP. The interval 1 to 92 is disordered; the sequence is MGSKTPNDHR…KKKTLLGGLQ (92 aa). Residues 44-55 show a composition bias toward acidic residues; it reads GETEDGEDEDDD. Basic residues predominate over residues 71-86; sequence TKKKNKRKKNKKKKKT. Residue H217 coordinates substrate. A divalent metal cation-binding residues include D238, D249, and H318. A substrate-binding site is contributed by H326. 2 residues coordinate a divalent metal cation: E351 and E446.

The protein belongs to the peptidase M24A family. Methionine aminopeptidase eukaryotic type 2 subfamily. Co(2+) serves as cofactor. The cofactor is Zn(2+). It depends on Mn(2+) as a cofactor. Fe(2+) is required as a cofactor.

It localises to the cytoplasm. It catalyses the reaction Release of N-terminal amino acids, preferentially methionine, from peptides and arylamides.. Its function is as follows. Cotranslationally removes the N-terminal methionine from nascent proteins. The N-terminal methionine is often cleaved when the second residue in the primary sequence is small and uncharged (Met-Ala-, Cys, Gly, Pro, Ser, Thr, or Val). This chain is Methionine aminopeptidase 2-2, found in Blastomyces gilchristii (strain SLH14081) (Blastomyces dermatitidis).